Here is a 206-residue protein sequence, read N- to C-terminus: Small ribosomal subunit protein uS7 (206 aa).

The span at 1–19 shows a compositional bias: acidic residues; sequence MSAEDTPEADADAAEESEP. Positions 1–25 are disordered; sequence MSAEDTPEADADAAEESEPETARAK. An N-acetylserine modification is found at Ser2.

This sequence belongs to the universal ribosomal protein uS7 family. Part of the 30S ribosomal subunit.

In terms of biological role, one of the primary rRNA binding proteins, it binds directly to 16S rRNA where it nucleates assembly of the head domain of the 30S subunit. Is located at the subunit interface close to the decoding center. The protein is Small ribosomal subunit protein uS7 of Haloarcula marismortui (strain ATCC 43049 / DSM 3752 / JCM 8966 / VKM B-1809) (Halobacterium marismortui).